Reading from the N-terminus, the 59-residue chain is Large ribosomal subunit protein bL33 (59 aa).

It belongs to the bacterial ribosomal protein bL33 family.

This chain is Large ribosomal subunit protein bL33, found in Neorickettsia sennetsu (strain ATCC VR-367 / Miyayama) (Ehrlichia sennetsu).